The primary structure comprises 486 residues: Dipeptide and tripeptide permease B (486 aa).

Residues 1–27 (MNKPVSIGLLQQPKPFFMIFFVELWER) lie on the Cytoplasmic side of the membrane. The helical transmembrane segment at 28 to 48 (FGYYGVQGVLTVYFVQKLGFS) threads the bilayer. Topologically, residues 49 to 52 (QEQA) are periplasmic. The chain crosses the membrane as a helical span at residues 53–73 (FITFGAFAALVFGLISIGGYV). Over 74–82 (GDHLLGTKR) the chain is Cytoplasmic. Residues 83–103 (TIVLGAIVLAIGYFMTGLSIL) form a helical membrane-spanning segment. Residues 104–106 (HPN) are Periplasmic-facing. Residues 107 to 127 (LIFYALGTIAVGNGLFKANPA) traverse the membrane as a helical segment. At 128-146 (SLLSKCYPPKDPRLDGAFT) the chain is on the cytoplasmic side. Residues 147–167 (LFYMSINLGSLFSLALAPVIA) traverse the membrane as a helical segment. Over 168–172 (EKFSY) the chain is Periplasmic. The helical transmembrane segment at 173 to 193 (AVTYNICGIGLIIALLVYIFC) threads the bilayer. Residues 194–211 (RNTVRNIGSEPDHQRINY) are Cytoplasmic-facing. The helical transmembrane segment at 212–232 (TNLFLVVAGSVVMVYVCAWLM) threads the bilayer. Position 233 (His-233) is a topological domain, periplasmic. Residues 234–254 (NVKIANIMLITLSVIVVFIFF) form a helical membrane-spanning segment. At 255 to 267 (REALKQDKIGRNK) the chain is on the cytoplasmic side. The helical transmembrane segment at 268-288 (MFVAFILMLQAIVFFILYAQM) threads the bilayer. Over 289-311 (PTSLNFFAIHNVHHQLLGFNINP) the chain is Periplasmic. Residues 312–332 (VSFQALNPFWIVVASPILAVL) form a helical membrane-spanning segment. The Cytoplasmic portion of the chain corresponds to 333–348 (YTHWGAKGKDLTMPAK). The helical transmembrane segment at 349 to 369 (FAVGMFLCSLGFLTAAAAGLW) threads the bilayer. At 370–375 (FADEQG) the chain is on the periplasmic side. A helical transmembrane segment spans residues 376–396 (LTSAWFIVLVYLFQGVGELMI). At 397–419 (SALGLAMIAALVPQYLMGFILGM) the chain is on the cytoplasmic side. A helical membrane pass occupies residues 420-440 (WYLTQATSSLLGGYVAALTAA). Topologically, residues 441–456 (PKGITDPLQTLPVYTS) are periplasmic. A helical transmembrane segment spans residues 457–477 (VFGKIGIATFIVAIIMAATVP). Residues 478-486 (LLNRMMQEK) lie on the Cytoplasmic side of the membrane.

The protein belongs to the major facilitator superfamily. Proton-dependent oligopeptide transporter (POT/PTR) (TC 2.A.17) family. DtpB subfamily.

Its subcellular location is the cell inner membrane. Proton-dependent permease that transports di- and tripeptides. In Photorhabdus luminescens (Xenorhabdus luminescens), this protein is Dipeptide and tripeptide permease B.